Reading from the N-terminus, the 713-residue chain is Methionine--tRNA ligase (713 aa).

The 'HIGH' region signature appears at 31–41 (PYANGSIHLGH). Cys-162, Cys-165, Cys-175, and Cys-178 together coordinate Zn(2+). Residues 348 to 352 (KMSKS) carry the 'KMSKS' region motif. Position 351 (Lys-351) interacts with ATP. The 105-residue stretch at 609–713 (DFAKIDLRIV…DGAKAGMRVK (105 aa)) folds into the tRNA-binding domain.

This sequence belongs to the class-I aminoacyl-tRNA synthetase family. MetG type 1 subfamily. As to quaternary structure, homodimer. Zn(2+) serves as cofactor.

It is found in the cytoplasm. It carries out the reaction tRNA(Met) + L-methionine + ATP = L-methionyl-tRNA(Met) + AMP + diphosphate. In terms of biological role, is required not only for elongation of protein synthesis but also for the initiation of all mRNA translation through initiator tRNA(fMet) aminoacylation. The sequence is that of Methionine--tRNA ligase from Colwellia psychrerythraea (strain 34H / ATCC BAA-681) (Vibrio psychroerythus).